The sequence spans 708 residues: Glycine--tRNA ligase beta subunit (708 aa).

It belongs to the class-II aminoacyl-tRNA synthetase family. As to quaternary structure, tetramer of two alpha and two beta subunits.

It is found in the cytoplasm. It carries out the reaction tRNA(Gly) + glycine + ATP = glycyl-tRNA(Gly) + AMP + diphosphate. The chain is Glycine--tRNA ligase beta subunit from Methylobacillus flagellatus (strain ATCC 51484 / DSM 6875 / VKM B-1610 / KT).